Consider the following 339-residue polypeptide: Protein FAM131B (339 aa).

A disordered region spans residues 1–22 (MDSTSSLHGSSLHRPSTEQTRT). 3 positions are modified to phosphoserine: Ser47, Ser114, and Ser117. The disordered stretch occupies residues 222-339 (GPAFGDSQPS…PLLTQPSTPA (118 aa)). Composition is skewed to polar residues over residues 239 to 250 (QPASGYSAQEPS) and 324 to 339 (PTTSFLPLLTQPSTPA). Thr325 carries the phosphothreonine modification. Ser327 carries the phosphoserine modification.

Belongs to the FAM131 family.

This chain is Protein FAM131B (FAM131B), found in Bos taurus (Bovine).